Consider the following 254-residue polypeptide: N-acetylglucosaminyldiphosphoundecaprenol N-acetyl-beta-D-mannosaminyltransferase (254 aa).

The protein belongs to the glycosyltransferase 26 family. TagA/TarA subfamily.

It carries out the reaction UDP-N-acetyl-alpha-D-mannosamine + N-acetyl-alpha-D-glucosaminyl-di-trans,octa-cis-undecaprenyl diphosphate = N-acetyl-beta-D-mannosaminyl-(1-&gt;4)-N-acetyl-alpha-D-glucosaminyl di-trans,octa-cis-undecaprenyl diphosphate + UDP + H(+). Its pathway is cell wall biogenesis; poly(ribitol phosphate) teichoic acid biosynthesis. Functionally, catalyzes the conversion of GlcNAc-PP-undecaprenol into ManNAc-GlcNAc-PP-undecaprenol, the first committed lipid intermediate in the de novo synthesis of teichoic acid. The protein is N-acetylglucosaminyldiphosphoundecaprenol N-acetyl-beta-D-mannosaminyltransferase of Staphylococcus aureus (strain NCTC 8325 / PS 47).